The chain runs to 450 residues: Phosphoglucosamine mutase (450 aa).

Serine 97 (phosphoserine intermediate) is an active-site residue. The Mg(2+) site is built by serine 97, aspartate 236, aspartate 238, and aspartate 240. Serine 97 is modified (phosphoserine).

This sequence belongs to the phosphohexose mutase family. Requires Mg(2+) as cofactor. Post-translationally, activated by phosphorylation.

It catalyses the reaction alpha-D-glucosamine 1-phosphate = D-glucosamine 6-phosphate. Functionally, catalyzes the conversion of glucosamine-6-phosphate to glucosamine-1-phosphate. The polypeptide is Phosphoglucosamine mutase (Prochlorococcus marinus (strain MIT 9312)).